A 476-amino-acid polypeptide reads, in one-letter code: Cysteine--tRNA ligase (476 aa).

Cys36 is a binding site for Zn(2+). The 'HIGH' region signature appears at 38–48 (PTVYDYAHIGN). Positions 221, 246, and 250 each coordinate Zn(2+). A 'KMSKS' region motif is present at residues 278 to 282 (KMSKS). Lys281 contacts ATP.

It belongs to the class-I aminoacyl-tRNA synthetase family. In terms of assembly, monomer. Zn(2+) is required as a cofactor.

It localises to the cytoplasm. The catalysed reaction is tRNA(Cys) + L-cysteine + ATP = L-cysteinyl-tRNA(Cys) + AMP + diphosphate. The protein is Cysteine--tRNA ligase of Chlamydia caviae (strain ATCC VR-813 / DSM 19441 / 03DC25 / GPIC) (Chlamydophila caviae).